A 199-amino-acid chain; its full sequence is NAD(P)H-quinone oxidoreductase chain 6 (199 aa).

Transmembrane regions (helical) follow at residues 9 to 29 (IVSFAILAAMMIGSAIGVVLL), 32 to 52 (VVYSAFLLGGVFISIAGLYLL), 61 to 81 (AQVLIYVGAVNVLILFAIMLV), 102 to 122 (LVCAGIFALLSAMVLTTPWAI), and 143 to 163 (FLLPFELASILLLMALVGAIV).

It belongs to the complex I subunit 6 family.

The protein resides in the membrane. It catalyses the reaction a plastoquinone + NADH + (n+1) H(+)(in) = a plastoquinol + NAD(+) + n H(+)(out). The catalysed reaction is a plastoquinone + NADPH + (n+1) H(+)(in) = a plastoquinol + NADP(+) + n H(+)(out). In terms of biological role, NDH-1 shuttles electrons from NAD(P)H, via FMN and iron-sulfur (Fe-S) centers, to quinones in the respiratory chain. The immediate electron acceptor for the enzyme in this species is believed to be plastoquinone. Couples the redox reaction to proton translocation (for every two electrons transferred, four hydrogen ions are translocated across the cytoplasmic membrane), and thus conserves the redox energy in a proton gradient. This chain is NAD(P)H-quinone oxidoreductase chain 6 (ndhG), found in Leptolyngbya boryana (Plectonema boryanum).